Here is a 117-residue protein sequence, read N- to C-terminus: Mediator of RNA polymerase II transcription subunit 11 (117 aa).

The residue at position 2 (alanine 2) is an N-acetylalanine.

The protein belongs to the Mediator complex subunit 11 family. In terms of assembly, component of the Mediator complex, which is composed of MED1, MED4, MED6, MED7, MED8, MED9, MED10, MED11, MED12, MED13, MED13L, MED14, MED15, MED16, MED17, MED18, MED19, MED20, MED21, MED22, MED23, MED24, MED25, MED26, MED27, MED29, MED30, MED31, CCNC, CDK8 and CDC2L6/CDK11. The MED12, MED13, CCNC and CDK8 subunits form a distinct module termed the CDK8 module. Mediator containing the CDK8 module is less active than Mediator lacking this module in supporting transcriptional activation. Individual preparations of the Mediator complex lacking one or more distinct subunits have been variously termed ARC, CRSP, DRIP, PC2, SMCC and TRAP.

It is found in the nucleus. Its function is as follows. Component of the Mediator complex, a coactivator involved in the regulated transcription of nearly all RNA polymerase II-dependent genes. Mediator functions as a bridge to convey information from gene-specific regulatory proteins to the basal RNA polymerase II transcription machinery. Mediator is recruited to promoters by direct interactions with regulatory proteins and serves as a scaffold for the assembly of a functional pre-initiation complex with RNA polymerase II and the general transcription factors. This chain is Mediator of RNA polymerase II transcription subunit 11 (MED11), found in Bos taurus (Bovine).